The chain runs to 501 residues: Lysine--tRNA ligase (501 aa).

Residues Glu402 and Glu409 each coordinate Mg(2+).

It belongs to the class-II aminoacyl-tRNA synthetase family. Homodimer. It depends on Mg(2+) as a cofactor.

It localises to the cytoplasm. It catalyses the reaction tRNA(Lys) + L-lysine + ATP = L-lysyl-tRNA(Lys) + AMP + diphosphate. This chain is Lysine--tRNA ligase (lysS), found in Helicobacter pylori (strain ATCC 700392 / 26695) (Campylobacter pylori).